We begin with the raw amino-acid sequence, 632 residues long: DNA topoisomerase 4 subunit B (632 aa).

Residues Tyr5, Asn42, Asp69, 110–116 (GLHGVGI), and Lys334 each bind ATP. The region spanning 412–525 (TELFLVEGDS…DGHVYVAMPP (114 aa)) is the Toprim domain. Residues Glu418, Asp490, and Asp492 each contribute to the Mg(2+) site.

Belongs to the type II topoisomerase family. ParE type 1 subfamily. Heterotetramer composed of ParC and ParE. Requires Mg(2+) as cofactor. Mn(2+) is required as a cofactor. Ca(2+) serves as cofactor.

The catalysed reaction is ATP-dependent breakage, passage and rejoining of double-stranded DNA.. Its function is as follows. Topoisomerase IV is essential for chromosome segregation. It relaxes supercoiled DNA. Performs the decatenation events required during the replication of a circular DNA molecule. The sequence is that of DNA topoisomerase 4 subunit B from Haemophilus influenzae (strain ATCC 51907 / DSM 11121 / KW20 / Rd).